The following is a 224-amino-acid chain: Ribonuclease 3 (224 aa).

In terms of domain architecture, RNase III spans 4–127 (IEKLEQSLTY…IIGAIHLEAG (124 aa)). Glu40 provides a ligand contact to Mg(2+). Residue Asp44 is part of the active site. Positions 113 and 116 each coordinate Mg(2+). The active site involves Glu116. The DRBM domain occupies 154–223 (DYKTKLQEIT…AKIALEKLGA (70 aa)).

It belongs to the ribonuclease III family. As to quaternary structure, homodimer. Mg(2+) serves as cofactor.

The protein resides in the cytoplasm. The enzyme catalyses Endonucleolytic cleavage to 5'-phosphomonoester.. In terms of biological role, digests double-stranded RNA. Involved in the processing of primary rRNA transcript to yield the immediate precursors to the large and small rRNAs (23S and 16S). Also processes some mRNAs, and tRNAs when they are encoded in the rRNA operon. Functionally, CRISPR (clustered regularly interspaced short palindromic repeat) is an adaptive immune system that provides protection against mobile genetic elements (viruses, transposable elements and conjugative plasmids). CRISPR clusters contain spacers, sequences complementary to antecedent mobile elements, and target invading nucleic acids. CRISPR clusters are transcribed and processed into CRISPR RNA (crRNA). In this organism endogenous ribonuclease 3 and Cas9 are required for correct coprocessing of pre-crRNA and the trans-encoded small RNA (tracrRNA). Cas9, crRNA and tracrRNA are required for cleavage of invading DNA. Complements pre-crRNA and tracrRNA coprocessing defects in an rnc deletion in S.pyogenes strain 370. The polypeptide is Ribonuclease 3 (Campylobacter jejuni subsp. jejuni serotype O:2 (strain ATCC 700819 / NCTC 11168)).